The sequence spans 227 residues: Ribosomal RNA small subunit methyltransferase G (227 aa).

S-adenosyl-L-methionine is bound by residues Gly69, Phe74, 119 to 120 (VE), and Arg134.

It belongs to the methyltransferase superfamily. RNA methyltransferase RsmG family.

It is found in the cytoplasm. Its function is as follows. Specifically methylates the N7 position of a guanine in 16S rRNA. The polypeptide is Ribosomal RNA small subunit methyltransferase G (Mycoplasmopsis pulmonis (strain UAB CTIP) (Mycoplasma pulmonis)).